We begin with the raw amino-acid sequence, 198 residues long: Angiopoietin-like protein 8 (198 aa).

The first 21 residues, 1–21 (MPVPALCLLWALAMVTRPASA), serve as a signal peptide directing secretion.

This sequence belongs to the ANGPTL8 family. In terms of assembly, interacts with ANGPTL3. In terms of processing, proteolytically cleaved at the N-terminus. Predominantly expressed in liver. Also expressed in adipose tissues.

The protein resides in the secreted. Hormone that acts as a blood lipid regulator by regulating serum triglyceride levels. May be involved in the metabolic transition between fasting and refeeding: required to direct fatty acids to adipose tissue for storage in the fed state. This is Angiopoietin-like protein 8 from Homo sapiens (Human).